The chain runs to 448 residues: Histidinol dehydrogenase (448 aa).

The NAD(+) site is built by Y136, Q197, and N220. S243, Q265, and H268 together coordinate substrate. Residues Q265 and H268 each contribute to the Zn(2+) site. Catalysis depends on proton acceptor residues E333 and H334. H334, D367, E421, and H426 together coordinate substrate. D367 contributes to the Zn(2+) binding site. H426 serves as a coordination point for Zn(2+).

The protein belongs to the histidinol dehydrogenase family. It depends on Zn(2+) as a cofactor.

It catalyses the reaction L-histidinol + 2 NAD(+) + H2O = L-histidine + 2 NADH + 3 H(+). Its pathway is amino-acid biosynthesis; L-histidine biosynthesis; L-histidine from 5-phospho-alpha-D-ribose 1-diphosphate: step 9/9. Catalyzes the sequential NAD-dependent oxidations of L-histidinol to L-histidinaldehyde and then to L-histidine. The polypeptide is Histidinol dehydrogenase (Pseudomonas savastanoi pv. phaseolicola (strain 1448A / Race 6) (Pseudomonas syringae pv. phaseolicola (strain 1448A / Race 6))).